Consider the following 219-residue polypeptide: Small ribosomal subunit protein uS3 (219 aa).

The 70-residue stretch at 41–110 folds into the KH type-2 domain; it reads IRKIINTEYS…DVSINICEVK (70 aa).

Belongs to the universal ribosomal protein uS3 family. In terms of assembly, part of the 30S ribosomal subunit. Forms a tight complex with proteins S10 and S14.

Its function is as follows. Binds the lower part of the 30S subunit head. Binds mRNA in the 70S ribosome, positioning it for translation. This is Small ribosomal subunit protein uS3 from Orientia tsutsugamushi (strain Ikeda) (Rickettsia tsutsugamushi).